A 445-amino-acid polypeptide reads, in one-letter code: MRYHPHTPDDVRAMLDVVGAERVDDLFRSIPQALRLDRPLDLPPAADEIALFSELRRLAARNETAHPPFVGAGCYPHHVPPVVDQLLLRGEFFTAYTPYQPEISQGTLQALFEWQTFVCLLTGMDVSNASMYDGATATAEAALMAGRITGRDKVVVSAALHPEYRKVLATYLRSTGDEIVTVPFGADGRTDLAALAQAVDGRTACVILGYPNFLGVVDALPEAAALARAAGALTVAATAEAVSLGLLQAPGALGADVAVGTFQSFGNPMSFGGPAPGFFATREKSLRQMPGRVAGATVDKQGRRGFVLTLSTREQHIRREKATSNICTNSGLCALASTIHLSLLGKRGLAELARLNHGRARMLRDAMERAGCRPVFSGPYFNEQVFDVGDAEAVVAKLAKRGIVAGAPLARWYPDAPHAKGALLCAATELHGPELIQLFASTVRS.

The protein belongs to the GcvP family. N-terminal subunit subfamily. As to quaternary structure, the glycine cleavage system is composed of four proteins: P, T, L and H. In this organism, the P 'protein' is a heterodimer of two subunits.

The catalysed reaction is N(6)-[(R)-lipoyl]-L-lysyl-[glycine-cleavage complex H protein] + glycine + H(+) = N(6)-[(R)-S(8)-aminomethyldihydrolipoyl]-L-lysyl-[glycine-cleavage complex H protein] + CO2. In terms of biological role, the glycine cleavage system catalyzes the degradation of glycine. The P protein binds the alpha-amino group of glycine through its pyridoxal phosphate cofactor; CO(2) is released and the remaining methylamine moiety is then transferred to the lipoamide cofactor of the H protein. This is Probable glycine dehydrogenase (decarboxylating) subunit 1 from Anaeromyxobacter dehalogenans (strain 2CP-1 / ATCC BAA-258).